A 448-amino-acid polypeptide reads, in one-letter code: Glutamyl-tRNA reductase (448 aa).

Residues 52-55 (TCNR), Ser-105, 110-112 (EDQ), and Gln-116 contribute to the substrate site. The active-site Nucleophile is the Cys-53. NADP(+) is bound at residue 184-189 (GAGEMG). Residues 406–435 (DPDFGGPDQATPPEFTKGMSVEDIPDGMRD) form a disordered region.

The protein belongs to the glutamyl-tRNA reductase family. Homodimer.

It carries out the reaction (S)-4-amino-5-oxopentanoate + tRNA(Glu) + NADP(+) = L-glutamyl-tRNA(Glu) + NADPH + H(+). It participates in porphyrin-containing compound metabolism; protoporphyrin-IX biosynthesis; 5-aminolevulinate from L-glutamyl-tRNA(Glu): step 1/2. Catalyzes the NADPH-dependent reduction of glutamyl-tRNA(Glu) to glutamate 1-semialdehyde (GSA). The protein is Glutamyl-tRNA reductase of Haloarcula marismortui (strain ATCC 43049 / DSM 3752 / JCM 8966 / VKM B-1809) (Halobacterium marismortui).